The sequence spans 158 residues: MSIEGVFREGFVTTSLDAVINWTRTGSLWPMTFGLACCAVEMIHAGCARYDLDRFGVVFRPSPRQSDLMIVAGTLCNKMAPALRKVYDQMAEPRWVISMGSCANGGGYYHYSYSVVRGCDRIVPVDVYVPGCPPTAEALLYGIIQLQNKIKRTNTIAR.

Cys37, Cys38, Cys102, and Cys132 together coordinate [4Fe-4S] cluster.

This sequence belongs to the complex I 20 kDa subunit family. NDH-1 is composed of 14 different subunits. Subunits NuoB, C, D, E, F, and G constitute the peripheral sector of the complex. It depends on [4Fe-4S] cluster as a cofactor.

It localises to the cell inner membrane. The catalysed reaction is a quinone + NADH + 5 H(+)(in) = a quinol + NAD(+) + 4 H(+)(out). NDH-1 shuttles electrons from NADH, via FMN and iron-sulfur (Fe-S) centers, to quinones in the respiratory chain. Couples the redox reaction to proton translocation (for every two electrons transferred, four hydrogen ions are translocated across the cytoplasmic membrane), and thus conserves the redox energy in a proton gradient. This Aromatoleum aromaticum (strain DSM 19018 / LMG 30748 / EbN1) (Azoarcus sp. (strain EbN1)) protein is NADH-quinone oxidoreductase subunit B.